An 886-amino-acid chain; its full sequence is Receptor-like kinase TMK2 (886 aa).

A signal peptide spans 1–20 (MIAKNFLLLLCFIALVNVES). Over 21–460 (SPDEAVMIAL…GKKASSNAGK (440 aa)) the chain is Extracellular. Asn41 carries an N-linked (GlcNAc...) asparagine glycan. A disulfide bridge links Cys48 with Cys56. LRR repeat units follow at residues 59–83 (SNRVTAIQIGDRGISGKLPPDLGKL), 84–106 (TSLTKFEVMRNRLTGPIPSLAGL), 107–129 (KSLVTVYANDNDFTSVPEDFFSG), 131–155 (SSLQHVSLDNNPFDSWVIPPSLENA), 157–179 (SLVDFSAVNCNLSGKIPDYLFEG), 182–206 (FSSLTTLKLSYNSLVCEFPMNFSDS), 208–232 (VQVLMLNGQKGREKLHGSISFLQKM), 233–254 (TSLTNVTLQGNSFSGPLPDFSG), 255–279 (LVSLKSFNVRENQLSGLVPSSLFEL), and 281–302 (SLSDVALGNNLLQGPTPNFTAP). 3 N-linked (GlcNAc...) asparagine glycosylation sites follow: Asn154, Asn167, and Asn202. Residue Asn237 is glycosylated (N-linked (GlcNAc...) asparagine). A glycan (N-linked (GlcNAc...) asparagine) is linked at Asn298. 2 disulfide bridges follow: Cys315/Cys323 and Cys353/Cys361. 3 LRR repeats span residues 363–386 (GTDITVINFKNLGLNGTISPRFAD), 387–410 (FASLRVINLSQNNLNGTIPQELAK), and 411–438 (LSNLKTLDVSKNRLCGEVPRFNTTIVNT). N-linked (GlcNAc...) asparagine glycosylation is found at Asn377, Asn394, Asn401, Asn432, and Asn437. The chain crosses the membrane as a helical span at residues 461-481 (IVGSVIGILLALLLIGVAIFF). Residues 482–886 (LVKKKMQYHK…ESTFKSGQGR (405 aa)) lie on the Cytoplasmic side of the membrane. The Protein kinase domain maps to 547–827 (FDEKNILGRG…HVVNVLVSLV (281 aa)). ATP-binding positions include 553 to 561 (LGRGGFGIV) and Lys575. The active-site Proton acceptor is the Asp676.

The protein belongs to the protein kinase superfamily. Ser/Thr protein kinase family. Expressed in siliques and flowers.

It is found in the membrane. The catalysed reaction is L-seryl-[protein] + ATP = O-phospho-L-seryl-[protein] + ADP + H(+). It carries out the reaction L-threonyl-[protein] + ATP = O-phospho-L-threonyl-[protein] + ADP + H(+). Involved in auxin signal transduction and cell expansion and proliferation regulation. This chain is Receptor-like kinase TMK2, found in Arabidopsis thaliana (Mouse-ear cress).